A 530-amino-acid chain; its full sequence is Putative ABC transporter ATP-binding protein SSO1893 (530 aa).

ABC transporter domains lie at 6 to 243 (IRDL…LGLE) and 282 to 516 (ILFA…EPPL). ATP-binding positions include 38–45 (GRSGSGKS) and 314–321 (GKNGSGKT).

Belongs to the ABC transporter superfamily.

The protein resides in the cell membrane. Probably part of an ABC transporter complex. Responsible for energy coupling to the transport system. The protein is Putative ABC transporter ATP-binding protein SSO1893 of Saccharolobus solfataricus (strain ATCC 35092 / DSM 1617 / JCM 11322 / P2) (Sulfolobus solfataricus).